Consider the following 346-residue polypeptide: Very-long-chain 3-oxoacyl-CoA reductase (346 aa).

The chain crosses the membrane as a helical span at residues 26 to 46; sequence SAYFLLAAGSLFVASRALTFV. Residues Val-71, Asp-126, Asp-134, Asn-153, Tyr-220, Lys-224, Ile-253, and Ser-255 each coordinate NADP(+). The active-site Proton donor is Tyr-220. Lys-224 serves as the catalytic Lowers pKa of active site Tyr.

It belongs to the short-chain dehydrogenases/reductases (SDR) family.

The protein localises to the endoplasmic reticulum membrane. It carries out the reaction a very-long-chain (3R)-3-hydroxyacyl-CoA + NADP(+) = a very-long-chain 3-oxoacyl-CoA + NADPH + H(+). It functions in the pathway lipid metabolism; fatty acid biosynthesis. In terms of biological role, component of the microsomal membrane bound fatty acid elongation system, which produces the 26-carbon very long-chain fatty acids (VLCFA) from palmitate. Catalyzes the reduction of the 3-ketoacyl-CoA intermediate that is formed in each cycle of fatty acid elongation. VLCFAs serve as precursors for ceramide and sphingolipids. The chain is Very-long-chain 3-oxoacyl-CoA reductase from Aspergillus oryzae (strain ATCC 42149 / RIB 40) (Yellow koji mold).